The primary structure comprises 524 residues: Protopine 6-monooxygenase (524 aa).

3 helical membrane-spanning segments follow: residues Leu-4–Tyr-24, Leu-232–Gln-252, and Met-319–Met-339. Residue Cys-462 participates in heme binding.

Belongs to the cytochrome P450 family. It depends on heme as a cofactor.

It localises to the endoplasmic reticulum membrane. The catalysed reaction is protopine + reduced [NADPH--hemoprotein reductase] + O2 = 6-hydroxyprotopine + oxidized [NADPH--hemoprotein reductase] + H2O + H(+). Its pathway is alkaloid biosynthesis. In terms of biological role, catalyzes the conversion of protopine and allocryptopine to dihydrosanguinarine and dihydrochelerythrine, respectively, in the biosynthesis of isoquinoline alkaloid sanguinarine. In Eschscholzia californica (California poppy), this protein is Protopine 6-monooxygenase (CYP82N2v2).